A 72-amino-acid polypeptide reads, in one-letter code: Large ribosomal subunit protein uL29 (72 aa).

It belongs to the universal ribosomal protein uL29 family.

In Thermus thermophilus (strain ATCC BAA-163 / DSM 7039 / HB27), this protein is Large ribosomal subunit protein uL29.